The primary structure comprises 320 residues: V-set and transmembrane domain-containing protein 4 (320 aa).

The signal sequence occupies residues 1 to 23; it reads MRLLALAAAALLARAPAPEVCAA. The Ig-like domain maps to 24 to 155; it reads LNVTVSPGPV…SSATEMRVIS (132 aa). At 24-180 the chain is on the extracellular side; it reads LNVTVSPGPV…WAFFEDLYVY (157 aa). 4 N-linked (GlcNAc...) asparagine glycosylation sites follow: asparagine 25, asparagine 41, asparagine 89, and asparagine 144. A disulfide bridge connects residues cysteine 46 and cysteine 127. A helical membrane pass occupies residues 181–201; it reads AVLVCCVGILSILLFMLVIVW. Residues 202-320 lie on the Cytoplasmic side of the membrane; the sequence is QSVFNKRKSR…AQILFEENKL (119 aa).

Proteolytically cleaved to generate a bioactive peptide.

The protein resides in the secreted. Its subcellular location is the cell membrane. In terms of biological role, peptide Lv enhances L-type voltage-gated calcium channel (L-VGCC) currents in retinal photoreceptors. The polypeptide is V-set and transmembrane domain-containing protein 4 (VSTM4) (Homo sapiens (Human)).